A 405-amino-acid chain; its full sequence is 2,3-diketo-5-methylthiopentyl-1-phosphate enolase (405 aa).

Lys-91 functions as the Proton acceptor in the catalytic mechanism. Substrate-binding positions include Lys-140, 166–169 (KDDE), His-257, Gly-329, and 351–352 (GG). Residues Lys-166, Asp-168, and Glu-169 each contribute to the Mg(2+) site. Lys-166 is modified (N6-carboxylysine).

Belongs to the RuBisCO large chain family. Type IV subfamily. As to quaternary structure, homodimer. Requires Mg(2+) as cofactor.

The enzyme catalyses 5-methylsulfanyl-2,3-dioxopentyl phosphate = 2-hydroxy-5-methylsulfanyl-3-oxopent-1-enyl phosphate. The protein operates within amino-acid biosynthesis; L-methionine biosynthesis via salvage pathway; L-methionine from S-methyl-5-thio-alpha-D-ribose 1-phosphate: step 3/6. Its function is as follows. Catalyzes the enolization of 2,3-diketo-5-methylthiopentyl-1-phosphate (DK-MTP-1-P) into 2-hydroxy-3-keto-5-methylthiopentenyl-1-phosphate (HK-MTPenyl-1-P). The sequence is that of 2,3-diketo-5-methylthiopentyl-1-phosphate enolase from Bacillus licheniformis (strain ATCC 14580 / DSM 13 / JCM 2505 / CCUG 7422 / NBRC 12200 / NCIMB 9375 / NCTC 10341 / NRRL NRS-1264 / Gibson 46).